We begin with the raw amino-acid sequence, 760 residues long: uncharacterized protein (760 aa).

An N-terminal signal peptide occupies residues 1-23 (MVIKKGFFALSSCTLGLGLILTA). Cys24 carries N-palmitoyl cysteine lipidation. Cys24 is lipidated: S-diacylglycerol cysteine. Disordered regions lie at residues 220 to 262 (ANGK…NSDN) and 443 to 482 (YEIK…NQTS). Composition is skewed to polar residues over residues 222–257 (GKTT…SQDA) and 448–472 (PTNS…GKEQ).

It belongs to the MG185/MG260 family.

It is found in the cell membrane. This is an uncharacterized protein from Mycoplasma pneumoniae (strain ATCC 29342 / M129 / Subtype 1) (Mycoplasmoides pneumoniae).